The chain runs to 115 residues: Ribonuclease P protein component (115 aa).

Belongs to the RnpA family. As to quaternary structure, consists of a catalytic RNA component (M1 or rnpB) and a protein subunit.

It carries out the reaction Endonucleolytic cleavage of RNA, removing 5'-extranucleotides from tRNA precursor.. Functionally, RNaseP catalyzes the removal of the 5'-leader sequence from pre-tRNA to produce the mature 5'-terminus. It can also cleave other RNA substrates such as 4.5S RNA. The protein component plays an auxiliary but essential role in vivo by binding to the 5'-leader sequence and broadening the substrate specificity of the ribozyme. The polypeptide is Ribonuclease P protein component (Bacillus cereus (strain 03BB102)).